The chain runs to 320 residues: MSDQPETPSNSRNSHENVGAKKADANVASKFRSLHISETTKPLTSTRALYKTTRNNSRGATEFHKHVCKLAWKYLACIDKSSISHIEIEMKFGVITDKRTHRRMTPHNKPFIVQNRNGRLVSNVPEQMFSSFQELLRSKSENPSKCAPRVVKQVQKYTKDSIYNCNNASKVGKLTSWRCSEDLRNKELKLTYIKKVRVKDFLIRYPQSSLDAKISISLEVPEYETSAAFRNGFILQRTKSRSTYTFNDKMPLHLDLTKVTTTRRNSHQYTSHEVEVEMDPIFKETISANDREKFNEYMCSFLNASDLIRKAAERDNMLTT.

Residues 1–12 (MSDQPETPSNSR) show a composition bias toward polar residues. The disordered stretch occupies residues 1–23 (MSDQPETPSNSRNSHENVGAKKA). Positions 13–23 (NSHENVGAKKA) are enriched in basic and acidic residues.

Belongs to the fungal TPase family. Mg(2+) is required as a cofactor. It depends on Mn(2+) as a cofactor.

The protein localises to the cytoplasm. It is found in the nucleus. The enzyme catalyses a 5'-end triphospho-ribonucleoside in mRNA + H2O = a 5'-end diphospho-ribonucleoside in mRNA + phosphate + H(+). Its function is as follows. Probably involved in an RNA processing event other than mRNA capping. Releases gamma-phosphate from the 5'-end of RNA to produce a diphosphate terminus. The protein is Polynucleotide 5'-triphosphatase CTL1 of Saccharomyces cerevisiae (strain ATCC 204508 / S288c) (Baker's yeast).